Consider the following 255-residue polypeptide: uncharacterized protein (255 aa).

It belongs to the IIV-6 155L family.

This is an uncharacterized protein from Acheta domesticus (House cricket).